Here is a 35-residue protein sequence, read N- to C-terminus: Photosystem II reaction center protein Y (35 aa).

At 1 to 4 the chain is on the lumenal side; it reads MDTR. A helical membrane pass occupies residues 5 to 23; the sequence is LLIVLLPIIAAASWAIYNI. The Stromal segment spans residues 24–35; that stretch reads GKILLLQLTKRS.

The protein belongs to the PsbY family. In terms of assembly, PSII is composed of 1 copy each of membrane proteins PsbA, PsbB, PsbC, PsbD, PsbE, PsbF, PsbH, PsbI, PsbJ, PsbK, PsbL, PsbM, PsbT, PsbX, PsbY, PsbZ, Psb30/Ycf12, at least 3 peripheral proteins of the oxygen-evolving complex and a large number of cofactors. It forms dimeric complexes.

Its subcellular location is the plastid. It is found in the chloroplast thylakoid membrane. Its function is as follows. Loosely associated component of the core of photosystem II (PSII), it is not always seen in crystals. PSII is a light-driven water plastoquinone oxidoreductase, using light energy to abstract electrons from H(2)O, generating a proton gradient subsequently used for ATP formation. This is Photosystem II reaction center protein Y from Cyanidioschyzon merolae (strain NIES-3377 / 10D) (Unicellular red alga).